The primary structure comprises 242 residues: 3-deoxy-manno-octulosonate cytidylyltransferase (242 aa).

The protein belongs to the KdsB family.

It is found in the cytoplasm. The enzyme catalyses 3-deoxy-alpha-D-manno-oct-2-ulosonate + CTP = CMP-3-deoxy-beta-D-manno-octulosonate + diphosphate. The protein operates within nucleotide-sugar biosynthesis; CMP-3-deoxy-D-manno-octulosonate biosynthesis; CMP-3-deoxy-D-manno-octulosonate from 3-deoxy-D-manno-octulosonate and CTP: step 1/1. Its pathway is bacterial outer membrane biogenesis; lipopolysaccharide biosynthesis. Functionally, activates KDO (a required 8-carbon sugar) for incorporation into bacterial lipopolysaccharide in Gram-negative bacteria. This Anaeromyxobacter dehalogenans (strain 2CP-C) protein is 3-deoxy-manno-octulosonate cytidylyltransferase.